A 315-amino-acid polypeptide reads, in one-letter code: Glutaminase (315 aa).

The substrate site is built by serine 70, asparagine 120, glutamate 166, asparagine 173, tyrosine 197, tyrosine 249, and valine 267.

The protein belongs to the glutaminase family. As to quaternary structure, homotetramer.

It catalyses the reaction L-glutamine + H2O = L-glutamate + NH4(+). In Mesorhizobium japonicum (strain LMG 29417 / CECT 9101 / MAFF 303099) (Mesorhizobium loti (strain MAFF 303099)), this protein is Glutaminase.